Consider the following 416-residue polypeptide: Phosphoglycerate kinase (416 aa).

13 residues coordinate (2R)-3-phosphoglycerate: V23, D24, F25, N26, R39, S62, H63, G65, R66, L121, R122, H169, and R170. G213 lines the ADP pocket. G213 provides a ligand contact to CDP. AMP is bound by residues A214 and K215. An ATP-binding site is contributed by A214. A214 is a Mg(2+) binding site. A CDP-binding site is contributed by D218. D218 lines the Mg(2+) pocket. K219 contacts AMP. Position 219 (K219) interacts with ATP. G237 is a binding site for ADP. Residue G237 participates in CDP binding. AMP-binding residues include G238 and G312. 2 residues coordinate ATP: G238 and G312. CDP-binding residues include G337 and F342. F342 provides a ligand contact to ADP. E343 serves as a coordination point for AMP. ATP-binding residues include E343, D374, and T375. D374 contacts Mg(2+).

The protein belongs to the phosphoglycerate kinase family. Monomer. The cofactor is Mg(2+).

Its subcellular location is the cytoplasm. The protein localises to the mitochondrion. It catalyses the reaction (2R)-3-phosphoglycerate + ATP = (2R)-3-phospho-glyceroyl phosphate + ADP. It participates in carbohydrate degradation; glycolysis; pyruvate from D-glyceraldehyde 3-phosphate: step 2/5. Functionally, catalyzes one of the two ATP producing reactions in the glycolytic pathway via the reversible conversion of 1,3-diphosphoglycerate to 3-phosphoglycerate. Both L- and D- forms of purine and pyrimidine nucleotides can be used as substrates, but the activity is much lower on pyrimidines. Negatively regulates the biosynthesis of acetyl-CoA from pyruvate in the mitochondrion. This is Phosphoglycerate kinase (pgkA) from Agaricus bisporus (White button mushroom).